A 370-amino-acid polypeptide reads, in one-letter code: Galactose-1-phosphate uridylyltransferase (370 aa).

2 residues coordinate Zn(2+): Cys51 and Cys54. Residues Ala60 and 76–77 contribute to the UDP-alpha-D-glucose site; that span reads NG. His121 lines the Zn(2+) pocket. Asn166 is a binding site for UDP-alpha-D-glucose. Residue His177 coordinates Zn(2+). His179 serves as the catalytic Tele-UMP-histidine intermediate. Gln181 contributes to the UDP-alpha-D-glucose binding site. Residues Glu195, His294, His311, and His313 each contribute to the Fe cation site. UDP-alpha-D-glucose-binding positions include 326–329 and 331–332; these read KFLV and FE.

This sequence belongs to the galactose-1-phosphate uridylyltransferase type 1 family. In terms of assembly, homodimer. Requires Zn(2+) as cofactor.

It carries out the reaction alpha-D-galactose 1-phosphate + UDP-alpha-D-glucose = alpha-D-glucose 1-phosphate + UDP-alpha-D-galactose. It participates in carbohydrate metabolism; galactose metabolism. This Kluyveromyces lactis (strain ATCC 8585 / CBS 2359 / DSM 70799 / NBRC 1267 / NRRL Y-1140 / WM37) (Yeast) protein is Galactose-1-phosphate uridylyltransferase (GAL7).